The following is a 1245-amino-acid chain: Structural polyprotein (1245 aa).

Positions 1–106 are disordered; that stretch reads MNRGFFNMLG…KPKPGKRQRM (106 aa). The host transcription inhibition stretch occupies residues 37-70; sequence GLASQIQQLTTAVSALVIGQATRPQPPRPRPPPR. Polar residues predominate over residues 38 to 49; sequence LASQIQQLTTAV. Residues 63-100 carry the Nuclear localization signal motif; the sequence is PRPRPPPRQKKQAPKQPPKPKKPKTQEKKKKQPAKPKP. Over residues 67 to 106 the composition is skewed to basic residues; the sequence is PPPRQKKQAPKQPPKPKKPKTQEKKKKQPAKPKPGKRQRM. Residues 86–115 form a binding to the viral RNA region; that stretch reads KTQEKKKKQPAKPKPGKRQRMALKLEADRL. Residues 100–114 form a ribosome-binding region; that stretch reads PGKRQRMALKLEADR. Residues 114–264 enclose the Peptidase S3 domain; sequence RLFDVKNEDG…KTTPEGTEEW (151 aa). H141 (charge relay system) is an active-site residue. A Nuclear export signal motif is present at residues 146–156; it reads IDHPVLSKLKF. An interaction with spike glycoprotein E2 region spans residues 157–162; that stretch reads TKSSAY. The active-site Charge relay system is the D163. Residues 185 to 195 form a dimerization of the capsid protein region; it reads PEGFYNWHHGA. S215 serves as the catalytic Charge relay system. Positions 221 to 225 are dimerization of the capsid protein; the sequence is DNSGR. The interaction with spike glycoprotein E2 stretch occupies residues 249 to 253; sequence SKGKT. Residues 265–279 are functions as an uncleaved signal peptide for the precursor of protein E3/E2; sequence SAAPLVTAMCLLGNV. The N-linked (GlcNAc...) asparagine; by host glycan is linked to N278. 4 disulfides stabilise this stretch: C283/C289, C480/C594, C529/C554, and C531/C548. The Extracellular segment spans residues 329-690; sequence SVIDDFTLTS…HEIVQHYYHR (362 aa). Residue N524 is glycosylated (N-linked (GlcNAc...) asparagine; by host). An N-linked (GlcNAc...) asparagine; by host glycan is attached at N646. The stretch at 682-730 forms a coiled coil; sequence EIVQHYYHRHPVYTILAVASATVAMMIGVTVAVLCACKARRECLTPYAL. The helical transmembrane segment at 691–718 threads the bilayer; it reads HPVYTILAVASATVAMMIGVTVAVLCAC. Residues 719–723 form an interaction with the capsid protein region; that stretch reads KARRE. Residues 719-751 are Cytoplasmic-facing; it reads KARRECLTPYALAPNAVIPTSLALLCCVRSANA. S-palmitoyl cysteine; by host attachment occurs at residues C724, C744, and C745. C724 and C745 form a disulfide bridge. Residues 752–763 lie on the Extracellular side of the membrane; that stretch reads ETFTETMSYLWS. A helical membrane pass occupies residues 764–784; it reads NSQPFFWVQLCIPLAAFIVLM. Position 785 (R785) is a topological domain, cytoplasmic. The helical transmembrane segment at 786–806 threads the bilayer; it reads CCSCCLPFLVVAGAYLAKVDA. Over 807–1214 the chain is Extracellular; the sequence is YEHATTVPNV…QAAISKTSWS (408 aa). 4 cysteine pairs are disulfide-bonded: C855–C920, C868–C900, C869–C902, and C874–C884. Residues 890–907 are E1 fusion peptide loop; sequence VYPFMWGGAQCFCDSENS. N-linked (GlcNAc...) asparagine; by host glycosylation is found at N945 and N1051. 4 cysteine pairs are disulfide-bonded: C1065–C1077, C1107–C1182, C1112–C1186, and C1134–C1176. The stretch at 1196-1245 forms a coiled coil; that stretch reads TPHKNDQEFQAAISKTSWSWLFALFGGASSLLIIGLMIFACSMMLTSTRR. Residues 1215–1239 form a helical membrane-spanning segment; it reads WLFALFGGASSLLIIGLMIFACSMM. The Cytoplasmic portion of the chain corresponds to 1240 to 1245; the sequence is LTSTRR.

It belongs to the alphavirus structural polyprotein family. As to quaternary structure, homomultimer. Interacts with host karyopherin KPNA4; this interaction allows the nuclear import of the viral capsid protein. Interacts with spike glycoprotein E2. Interacts with host IRAK1; the interaction leads to inhibition of IRAK1-dependent signaling. In terms of assembly, the precursor of protein E3/E2 and E1 form a heterodimer shortly after synthesis. The precursor of protein E3/E2 and E1 form a heterodimer shortly after synthesis. Processing of the precursor of protein E3/E2 into E2 and E3 results in a heterodimer of the spike glycoproteins E2 and E1. Spike at virion surface are constituted of a trimer of E2-E1 heterodimers. After target cell attachment and endocytosis, E1 change conformation to form homotrimers. E2-E1 heterodimers interact with host VLDLR or LRP8/APOER2 to mediate viral entry. Interacts with 6K protein. As to quaternary structure, interacts with spike glycoprotein E1. Processing of the precursor of protein E3/E2 into E2 and E3 results in a heterodimer of the spike glycoproteins E2 and E1. Spike at virion surface are constituted of a trimer of E2-E1 heterodimers. E2-E1 heterodimers interact with host VLDLR or LRP8/APOER2 to mediate viral entry. Interacts with 6K protein. Interacts with the capsid protein. In terms of assembly, oligomer. Interacts with spike glycoprotein E1. Interacts with spike glycoprotein E2. Specific enzymatic cleavages in vivo yield mature proteins. Capsid protein is auto-cleaved during polyprotein translation, unmasking a signal peptide at the N-terminus of the precursor of E3/E2. The remaining polyprotein is then targeted to the host endoplasmic reticulum, where host signal peptidase cleaves it into pE2, 6K and E1 proteins. pE2 is further processed to mature E3 and E2 by host furin in trans-Golgi vesicle. Post-translationally, palmitoylated via thioester bonds. These palmitoylations may induce disruption of the C-terminus transmembrane. This would result in the reorientation of E2 C-terminus from lumenal to cytoplasmic side. In terms of processing, N-glycosylated. Palmitoylated via thioester bonds.

The protein localises to the virion. The protein resides in the host cytoplasm. Its subcellular location is the host cell membrane. It localises to the host nucleus. It is found in the virion membrane. The protein localises to the host Golgi apparatus. The protein resides in the host trans-Golgi network. Its subcellular location is the host endoplasmic reticulum. It carries out the reaction Autocatalytic release of the core protein from the N-terminus of the togavirus structural polyprotein by hydrolysis of a -Trp-|-Ser- bond.. With respect to regulation, the channel activity is blocked by 5-N, N-Hexamethylene amiloride. In terms of biological role, forms an icosahedral capsid with a T=4 symmetry composed of 240 copies of the capsid protein surrounded by a lipid membrane through which penetrate 80 spikes composed of trimers of E1-E2 heterodimers. The capsid protein binds to the viral RNA genome at a site adjacent to a ribosome binding site for viral genome translation following genome release. Possesses a protease activity that results in its autocatalytic cleavage from the nascent structural protein. Following its self-cleavage, the capsid protein transiently associates with ribosomes, and within several minutes the protein binds to viral RNA and rapidly assembles into icosahedric core particles. The resulting nucleocapsid eventually associates with the cytoplasmic domain of the spike glycoprotein E2 at the cell membrane, leading to budding and formation of mature virions. In case of infection, new virions attach to target cells and after clathrin-mediated endocytosis their membrane fuses with the host endosomal membrane. This leads to the release of the nucleocapsid into the cytoplasm, followed by an uncoating event necessary for the genomic RNA to become accessible. The uncoating might be triggered by the interaction of capsid proteins with ribosomes. Binding of ribosomes would release the genomic RNA since the same region is genomic RNA-binding and ribosome-binding. Specifically inhibits interleukin-1 receptor-associated kinase 1/IRAK1-dependent signaling during viral entry, representing a means by which the alphaviruses may evade innate immune detection and activation prior to viral gene expression. Provides the signal sequence for the translocation of the precursor of protein E3/E2 to the host endoplasmic reticulum. Furin-cleaved E3 remains associated with spike glycoprotein E1 and mediates pH protection of the latter during the transport via the secretory pathway. After virion release from the host cell, the assembly protein E3 is gradually released in the extracellular space. Its function is as follows. Plays a role in viral attachment to target host cell, by binding to the cell receptors VLDLR or LRP8/APOER2. Synthesized as a pE2 precursor which is processed by furin at the cell membrane just before virion budding, giving rise to E2-E1 heterodimer. The pE2-E1 heterodimer is stable, whereas E2-E1 is unstable and dissociate at low pH. pE2 is processed at the last step, presumably to avoid E1 fusion activation before its final export to cell surface. E2 C-terminus contains a transitory transmembrane that would be disrupted by palmitoylation, resulting in reorientation of the C-terminal tail from lumenal to cytoplasmic side. This step is critical since E2 C-terminus is involved in budding by interacting with capsid proteins. This release of E2 C-terminus in cytoplasm occurs lately in protein export, and precludes premature assembly of particles at the endoplasmic reticulum membrane. Functionally, acts as a viroporin that participates in virus glycoprotein processing and transport to the plasma membrane, cell permeabilization and budding of viral particles. Disrupts the calcium homeostasis of the cell, probably at the endoplasmic reticulum level resulting in the increased levels of cytoplasmic calcium. Because of its lipophilic properties, the 6K protein is postulated to influence the selection of lipids that interact with the transmembrane domains of the glycoproteins, which, in turn, affects the deformability of the bilayer required for the extreme curvature that occurs as budding proceeds. Present in low amount in virions, about 3% compared to viral glycoproteins. In terms of biological role, class II viral fusion protein. Fusion activity is inactive as long as E1 is bound to E2 in mature virion. After virus attachment to target cell via host VLDLR or LRP8/APOER2 and endocytosis, acidification of the endosome induces dissociation of E1/E2 heterodimer and concomitant trimerization of the E1 subunits. This E1 trimer is fusion active, and promotes release of viral nucleocapsid in cytoplasm after endosome and viral membrane fusion. Efficient fusion requires the presence of cholesterol and sphingolipid in the target membrane. In Acrocephalus scirpaceus (Eurasian reed-warbler), this protein is Structural polyprotein.